We begin with the raw amino-acid sequence, 70 residues long: Chondroitin proteoglycan 9 (70 aa).

An N-terminal signal peptide occupies residues 1-19; sequence MNFWHLLLLAVLFFVTVFG. 2 O-linked (Xyl...) (chondroitin sulfate) serine glycosylation sites follow: S25 and S27.

In Caenorhabditis briggsae, this protein is Chondroitin proteoglycan 9 (cpg-9).